The primary structure comprises 233 residues: UPF0173 metal-dependent hydrolase Acid345_3437 (233 aa).

It belongs to the UPF0173 family.

This is UPF0173 metal-dependent hydrolase Acid345_3437 from Koribacter versatilis (strain Ellin345).